The primary structure comprises 166 residues: MALRKIRTYEDEILRKKSKVVEKFDQRLCQLLDDMKDTMYEANGIGLAAPQVGVLKRAVVIDIGEGAIELVNPEIEQVEGSAVDVEGCLSVPNVWGEVERPQKVVVKAQDRFGNEFRLEAEGLLARAVCHEIDHLDGILFVDKVIRFVSEEEIEQRRSRGDKMDLE.

Cys-88 and His-130 together coordinate Fe cation. Glu-131 is an active-site residue. His-134 is a Fe cation binding site.

This sequence belongs to the polypeptide deformylase family. Fe(2+) serves as cofactor.

The catalysed reaction is N-terminal N-formyl-L-methionyl-[peptide] + H2O = N-terminal L-methionyl-[peptide] + formate. In terms of biological role, removes the formyl group from the N-terminal Met of newly synthesized proteins. Requires at least a dipeptide for an efficient rate of reaction. N-terminal L-methionine is a prerequisite for activity but the enzyme has broad specificity at other positions. The sequence is that of Peptide deformylase from Caldicellulosiruptor bescii (strain ATCC BAA-1888 / DSM 6725 / KCTC 15123 / Z-1320) (Anaerocellum thermophilum).